The chain runs to 230 residues: Poxin (230 aa).

Catalysis depends on His43, which acts as the Proton donor. Tyr174 serves as the catalytic Shared with catalytic histidine of dimeric partner. Residue Lys178 is the Proton acceptor; shared with catalytic histidine of dimeric partner of the active site.

This sequence belongs to the poxin family. As to quaternary structure, homodimer.

The enzyme catalyses 2',3'-cGAMP + H2O = Gp(2'-5')Ap(3') + H(+). In terms of biological role, nuclease that cleaves host 2',3'-cGAMP. This is Poxin (P26) from Orgyia pseudotsugata multicapsid polyhedrosis virus (OpMNPV).